The following is a 292-amino-acid chain: Selenate reductase subunit B (292 aa).

Residues 1–43 (MGSKETKNTSRRDFLIKGAGAAALGAGAFAISQVPLLEKLASA) constitute a signal peptide (tat-type signal). 3 4Fe-4S ferredoxin-type domains span residues 84 to 113 (WIMV…PPGV), 129 to 160 (VTKK…KSED), and 161 to 190 (GIVA…FDWG). Cys93, Cys96, Cys99, Cys103, Cys138, Cys141, Cys146, Cys150, Cys170, Cys173, Cys176, Cys180, Cys230, Cys233, Cys245, and Cys249 together coordinate [4Fe-4S] cluster.

As to quaternary structure, the complex is composed of three subunits: SrdA, SrdB and SrdC. It depends on [4Fe-4S] cluster as a cofactor. Post-translationally, predicted to be exported by the Tat system. The position of the signal peptide cleavage has not been experimentally proven.

The protein resides in the secreted. The enzyme catalyses selenite + a quinone + H2O = selenate + a quinol. Functionally, component of the respiratory selenate reductase complex, which catalyzes the reduction of selenate to selenite. This subunit probably transfers electrons from SrdC to SrdA. This chain is Selenate reductase subunit B, found in Mesobacillus selenatarsenatis (strain DSM 18680 / JCM 14380 / FERM P-15431 / SF-1).